A 1046-amino-acid chain; its full sequence is Translation initiation factor IF-2 (1046 aa).

A disordered region spans residues Glu-49–Gly-448. Positions Pro-52 to Arg-71 are enriched in low complexity. Residues Arg-94–Leu-111 are compositionally biased toward pro residues. 2 stretches are compositionally biased toward low complexity: residues Pro-112–Val-139 and Pro-147–Pro-159. Over residues Ala-160 to Ala-176 the composition is skewed to pro residues. Residues Pro-177 to Pro-187 show a composition bias toward low complexity. A compositionally biased stretch (pro residues) spans Pro-188–Pro-206. Positions Arg-210–Gly-222 are enriched in gly residues. Residues Gly-223 to Ala-235 show a composition bias toward pro residues. Residues Ser-244–Ser-253 show a composition bias toward low complexity. 2 stretches are compositionally biased toward pro residues: residues Ser-260–Gly-281 and Arg-304–Pro-314. Over residues Pro-320–Gly-333 the composition is skewed to low complexity. Over residues Gly-334–Gly-414 the composition is skewed to gly residues. Residues Arg-415–Lys-426 are compositionally biased toward basic residues. The tr-type G domain maps to Ala-539–Asp-711. Residues Gly-548–Thr-555 are G1. Gly-548–Thr-555 is a GTP binding site. The tract at residues Gly-573–His-577 is G2. Residues Asp-598–Gly-601 are G3. GTP contacts are provided by residues Asp-598–His-602 and Asn-652–Asp-655. A G4 region spans residues Asn-652 to Asp-655. A G5 region spans residues Ser-688–Arg-690.

Belongs to the TRAFAC class translation factor GTPase superfamily. Classic translation factor GTPase family. IF-2 subfamily.

It localises to the cytoplasm. Its function is as follows. One of the essential components for the initiation of protein synthesis. Protects formylmethionyl-tRNA from spontaneous hydrolysis and promotes its binding to the 30S ribosomal subunits. Also involved in the hydrolysis of GTP during the formation of the 70S ribosomal complex. The sequence is that of Translation initiation factor IF-2 from Parafrankia sp. (strain EAN1pec).